The following is a 329-amino-acid chain: Putative helicase 109L (329 aa).

Positions 105–259 constitute a Helicase ATP-binding domain; sequence LTLLTQHKSC…LFDMFFGPEM (155 aa). 118 to 125 contributes to the ATP binding site; that stretch reads CYTGFGKT. The short motif at 212–215 is the DEAH box element; it reads DEAH.

It belongs to the DEAD box helicase family. DEAH subfamily.

This Invertebrate iridescent virus 3 (IIV-3) protein is Putative helicase 109L.